We begin with the raw amino-acid sequence, 131 residues long: MDVTRLLLATLVGFLCFLTVHSHLVFEETLGDDRSLKSNSSINSLDFSSVSIVALNKKSKKISRKEAEKRKRSSKKKASIKKVARPPPPSPCVATRDSCKPPAPACCNPCASCQCRFFGSACTCRVLNPNC.

Residues 1-22 (MDVTRLLLATLVGFLCFLTVHS) form the signal peptide. An N-linked (GlcNAc...) asparagine glycan is attached at Asn-39. The segment at 58 to 96 (KSKKISRKEAEKRKRSSKKKASIKKVARPPPPSPCVATR) is disordered. A compositionally biased stretch (basic residues) spans 70–84 (RKRSSKKKASIKKVA). Intrachain disulfides connect Cys-92–Cys-107, Cys-99–Cys-113, Cys-106–Cys-124, Cys-110–Cys-131, and Cys-115–Cys-122. The 40-residue stretch at 92–131 (CVATRDSCKPPAPACCNPCASCQCRFFGSACTCRVLNPNC) folds into the Agouti domain.

It localises to the secreted. In terms of biological role, involved in the regulation of melanogenesis. The binding of ASP to MC1R precludes alpha-MSH initiated signaling and thus blocks production of cAMP, leading to a down-regulation of eumelanogenesis (brown/black pigment) and thus increasing synthesis of pheomelanin (yellow/red pigment). This Rattus norvegicus (Rat) protein is Agouti-signaling protein.